Consider the following 305-residue polypeptide: Acyl transferase (305 aa).

Catalysis depends on charge relay system residues Ser114, Asp211, and His241.

It belongs to the LuxD family.

Its pathway is lipid metabolism; fatty acid reduction for biolumincescence. Functionally, acyl transferase is part of the fatty acid reductase system required for aldehyde biosynthesis; it produces fatty acids for the luminescent reaction. In Vibrio campbellii (strain ATCC BAA-1116), this protein is Acyl transferase.